Consider the following 372-residue polypeptide: N-methyl-L-tryptophan oxidase (372 aa).

4 to 34 (DLIIIGSGSVGAAAGYYATRAGLNVLMTDAH) contributes to the FAD binding site. Cysteine 308 carries the post-translational modification S-8alpha-FAD cysteine.

The protein belongs to the MSOX/MTOX family. MTOX subfamily. As to quaternary structure, monomer. It depends on FAD as a cofactor.

It catalyses the reaction N(alpha)-methyl-L-tryptophan + O2 + H2O = L-tryptophan + formaldehyde + H2O2. In terms of biological role, catalyzes the oxidative demethylation of N-methyl-L-tryptophan. The polypeptide is N-methyl-L-tryptophan oxidase (Shigella flexneri serotype 5b (strain 8401)).